The sequence spans 1165 residues: Leptin receptor (1165 aa).

An N-terminal signal peptide occupies residues 1-21 (MICQKFCVVLLHWEFIYVITA). The Extracellular portion of the chain corresponds to 22 to 839 (FNLSYPITPW…QDDIEKHQSD (818 aa)). N-linked (GlcNAc...) asparagine glycosylation is found at asparagine 23, asparagine 41, asparagine 56, asparagine 73, asparagine 81, and asparagine 98. 5 cysteine pairs are disulfide-bonded: cysteine 37–cysteine 90, cysteine 89–cysteine 99, cysteine 131–cysteine 142, cysteine 186–cysteine 196, and cysteine 188–cysteine 193. A glycan (N-linked (GlcNAc...) asparagine) is linked at asparagine 187. N-linked (GlcNAc...) asparagine glycans are attached at residues asparagine 206, asparagine 276, asparagine 347, and asparagine 397. The Fibronectin type-III 1 domain maps to 239 to 333 (PPLGLHMEIT…TPRVFTTQDV (95 aa)). The Ig-like domain occupies 331–429 (QDVIYFPPKI…HRYAELYVID (99 aa)). 5 disulfides stabilise this stretch: cysteine 352-cysteine 412, cysteine 413-cysteine 418, cysteine 436-cysteine 447, cysteine 473-cysteine 528, and cysteine 488-cysteine 498. Positions 467-484 (HRSSLYCSDIPSIHPISE) are leptin-binding. Residues asparagine 516, asparagine 624, asparagine 659, asparagine 688, asparagine 697, asparagine 728, and asparagine 750 are each glycosylated (N-linked (GlcNAc...) asparagine). Fibronectin type-III domains lie at 539–634 (PPSS…TVVM), 639–732 (PMRG…LTFS), and 740–833 (IVQS…QDDI). The WSXWS motif motif lies at 622-626 (WSNWS). Residues 840-862 (AGLYVIVPVIISSSILLLGTLLI) form a helical membrane-spanning segment. The Cytoplasmic portion of the chain corresponds to 863-1165 (SHQRMKKLFW…MENKMCDLTV (303 aa)). Positions 871–879 (FWEDVPNPK) match the Box 1 motif motif. Phosphoserine is present on serine 882. Positions 893–898 (ETFEHL) are required for JAK2 activation. The segment at 898 to 906 (LFIKHTASV) is required for STAT3 phosphorylation. Residue tyrosine 986 is modified to Phosphotyrosine; by JAK2. At tyrosine 1079 the chain carries Phosphotyrosine. At tyrosine 1141 the chain carries Phosphotyrosine; by JAK2.

Belongs to the type I cytokine receptor family. Type 2 subfamily. Present as a mixture of monomers and dimers. The phosphorylated receptor binds a number of SH2 domain-containing proteins such as JAK2, STAT3, PTPN11, and SOCS3. Interaction with SOCS3 inhibits JAK/STAT signaling and MAPK cascade. Post-translationally, on ligand binding, phosphorylated on two conserved C-terminal tyrosine residues (isoform B only) by JAK2. Tyr-986 is required for complete binding and activation of PTPN11, ERK/FOS activation,for interaction with SOCS3 and SOCS3 mediated inhibition of leptin signaling. Phosphorylation on Tyr-1141 is required for STAT3 binding/activation. Phosphorylation of Tyr-1079 has a more accessory role. In terms of tissue distribution, isoform A is expressed in fetal liver and in hematopoietic tissues and choroid plexus. In adults highest expression in heart, liver, small intestine, prostate and ovary. Low level in lung and kidney. Isoform B is highly expressed in hypothalamus, but also in skeletal muscle. Detected in fundic and antral epithelial cells of the gastric mucosa. Isoform B and isoform A are expressed by NK cells (at protein level).

It is found in the cell membrane. The protein localises to the basolateral cell membrane. It localises to the secreted. Receptor for hormone LEP/leptin. On ligand binding, mediates LEP central and peripheral effects through the activation of different signaling pathways such as JAK2/STAT3 and MAPK cascade/FOS. In the hypothalamus, LEP acts as an appetite-regulating factor that induces a decrease in food intake and an increase in energy consumption by inducing anorexinogenic factors and suppressing orexigenic neuropeptides, also regulates bone mass and secretion of hypothalamo-pituitary-adrenal hormones. In the periphery, increases basal metabolism, influences reproductive function, regulates pancreatic beta-cell function and insulin secretion, is pro-angiogenic and affects innate and adaptive immunity. Control of energy homeostasis and melanocortin production (stimulation of POMC and full repression of AgRP transcription) is mediated by STAT3 signaling, whereas distinct signals regulate NPY and the control of fertility, growth and glucose homeostasis. Involved in the regulation of counter-regulatory response to hypoglycemia by inhibiting neurons of the parabrachial nucleus. Has a specific effect on T lymphocyte responses, differentially regulating the proliferation of naive and memory T -ells. Leptin increases Th1 and suppresses Th2 cytokine production. In terms of biological role, may transport LEP across the blood-brain barrier. Binds LEP and mediates LEP endocytosis. Does not induce phosphorylation of and activate STAT3. Its function is as follows. Antagonizes Isoform A and isoform B-mediated LEP binding and endocytosis. The polypeptide is Leptin receptor (LEPR) (Homo sapiens (Human)).